Reading from the N-terminus, the 60-residue chain is Cecropin-B (60 aa).

Positions 1–25 (MNFTKLFILVAIAVLVVVGVQPVDG) are cleaved as a signal peptide. Leu59 carries the post-translational modification Leucine amide.

It belongs to the cecropin family.

The protein resides in the secreted. Functionally, cecropins have lytic and antibacterial activity against several Gram-positive and Gram-negative bacteria. This is Cecropin-B (CecB) from Anopheles gambiae (African malaria mosquito).